A 435-amino-acid chain; its full sequence is Enolase (435 aa).

A (2R)-2-phosphoglycerate-binding site is contributed by glutamine 163. The Proton donor role is filled by glutamate 205. Aspartate 243, glutamate 292, and aspartate 319 together coordinate Mg(2+). Residues lysine 344, arginine 373, serine 374, and lysine 395 each coordinate (2R)-2-phosphoglycerate. The active-site Proton acceptor is the lysine 344.

This sequence belongs to the enolase family. It depends on Mg(2+) as a cofactor.

It is found in the cytoplasm. Its subcellular location is the secreted. It localises to the cell surface. The catalysed reaction is (2R)-2-phosphoglycerate = phosphoenolpyruvate + H2O. It participates in carbohydrate degradation; glycolysis; pyruvate from D-glyceraldehyde 3-phosphate: step 4/5. In terms of biological role, catalyzes the reversible conversion of 2-phosphoglycerate (2-PG) into phosphoenolpyruvate (PEP). It is essential for the degradation of carbohydrates via glycolysis. The sequence is that of Enolase from Streptococcus agalactiae serotype Ia (strain ATCC 27591 / A909 / CDC SS700).